Reading from the N-terminus, the 447-residue chain is MNAWEVNFDGLVGLTHHYAGLSFGNEASTRHRFQVSNPRLAAKQGLLKMKALADAGFPQAVIPPHERPFIPVLRQLGFSGSDEQVLEKVARQAPHWLSSVSSASPMWVANAATIAPSADTLDGKVHLTVANLNNKFHRSLEAPVTESLLKAIFNDEEKFSVHSALPQVALLGDEGAANHNRLGGHYGEPGMQLFVYGREEGNDTLPSRYPARQTREASEAVARLNQVNPQQVIFAQQNPDVIDQGVFHNDVIAVSNRQVLFCHQQAFARQSQLLANLRARVNGFMAIEVPATQVSVSDAVSTYLFNSQLLSRDDGSMVLVLPQECREHAGVWCYLNELLAADNPISELKVFDLRESMANGGGPACLRLRVVLTQEERRAVNPAVMMNDTLFNALNDWVDRYYRDRLTAADLADPQLLREGREALDVLSQLLNLGSVYPFQREGGGNG.

Residues Ala19–Ser28, Asn110, and His137–Arg138 contribute to the substrate site. Glu174 is a catalytic residue. Arg212 lines the substrate pocket. His248 is an active-site residue. Substrate is bound by residues Asp250 and Asn359. Residue Cys365 is the Nucleophile of the active site.

It belongs to the succinylarginine dihydrolase family. In terms of assembly, homodimer.

The catalysed reaction is N(2)-succinyl-L-arginine + 2 H2O + 2 H(+) = N(2)-succinyl-L-ornithine + 2 NH4(+) + CO2. Its pathway is amino-acid degradation; L-arginine degradation via AST pathway; L-glutamate and succinate from L-arginine: step 2/5. Functionally, catalyzes the hydrolysis of N(2)-succinylarginine into N(2)-succinylornithine, ammonia and CO(2). The protein is N-succinylarginine dihydrolase of Escherichia coli (strain ATCC 8739 / DSM 1576 / NBRC 3972 / NCIMB 8545 / WDCM 00012 / Crooks).